The chain runs to 877 residues: Probable sulfate permease C3H7.02 (877 aa).

Helical transmembrane passes span 133 to 153 (WLVYDFIAGITVGCVVVPQGM), 161 to 181 (LPAQYGLYSSFVGVAIYCIFA), 186 to 206 (VSIGPVAVMSLVTSKVIANVQ), 221 to 241 (LALLAGAITCGLGLLRLGFII), 243 to 263 (FIPVPAVAGFTTGSALNIMAG), 292 to 312 (LPHTKVDAAFGLVSLFILYLV), 329 to 349 (VFFLTNVLRSAVIIIVGTAIS), 384 to 404 (LCADLASELPVSVIVLLLEHI), 424 to 444 (LIAMGATNLIGVFFHAYPATG), 461 to 481 (LGGIFTAGVVVLALYCLTGAF), 484 to 504 (IPNAVLSAVIIHSVFDLIIPW), 518 to 538 (ALIFICAVFVSVFSSIENGIY), and 543 to 563 (LSAALLLFRIAKPSGSFLGIL). The STAS domain maps to 594–747 (NLTVRDPPAG…SRSIEVGSAA (154 aa)). Disordered stretches follow at residues 643-663 (KASDRPWNDPAPRKKKNAPEV) and 793-821 (ADSDTISVSDDKDKKVEGHRPSQDPTFSH). Residues 801–821 (SDDKDKKVEGHRPSQDPTFSH) show a composition bias toward basic and acidic residues.

Belongs to the SLC26A/SulP transporter (TC 2.A.53) family.

The protein localises to the membrane. Its function is as follows. High affinity uptake of sulfate into the cell. This chain is Probable sulfate permease C3H7.02, found in Schizosaccharomyces pombe (strain 972 / ATCC 24843) (Fission yeast).